Here is a 479-residue protein sequence, read N- to C-terminus: Glycogen synthase (479 aa).

K15 lines the ADP-alpha-D-glucose pocket.

The protein belongs to the glycosyltransferase 1 family. Bacterial/plant glycogen synthase subfamily.

The enzyme catalyses [(1-&gt;4)-alpha-D-glucosyl](n) + ADP-alpha-D-glucose = [(1-&gt;4)-alpha-D-glucosyl](n+1) + ADP + H(+). It functions in the pathway glycan biosynthesis; glycogen biosynthesis. In terms of biological role, synthesizes alpha-1,4-glucan chains using ADP-glucose. The protein is Glycogen synthase of Histophilus somni (strain 129Pt) (Haemophilus somnus).